The chain runs to 143 residues: Small ribosomal subunit protein eS6 (143 aa).

It belongs to the eukaryotic ribosomal protein eS6 family.

In Methanoregula boonei (strain DSM 21154 / JCM 14090 / 6A8), this protein is Small ribosomal subunit protein eS6.